An 843-amino-acid chain; its full sequence is Glycogen phosphorylase, brain form (843 aa).

Ala2 is subject to N-acetylalanine. Phosphoserine; by PHK; in form phosphorylase A is present on Ser15. Residues Asp43, Tyr197, and Arg310 each coordinate AMP. Tyr197 bears the Phosphotyrosine mark. The residue at position 473 (Tyr473) is a Phosphotyrosine. Lys569 lines the pyridoxal 5'-phosphate pocket. Residues 677–678 form a pyridoxal 5'-phosphate region; the sequence is TG. N6-(pyridoxal phosphate)lysine is present on Lys681.

It belongs to the glycogen phosphorylase family. Homodimer. Dimers associate into a tetramer to form the enzymatically active phosphorylase A. Requires pyridoxal 5'-phosphate as cofactor. Phosphorylation of Ser-15 converts phosphorylase B (unphosphorylated) to phosphorylase A.

It carries out the reaction [(1-&gt;4)-alpha-D-glucosyl](n) + phosphate = [(1-&gt;4)-alpha-D-glucosyl](n-1) + alpha-D-glucose 1-phosphate. Activity of phosphorylase is controlled both by allosteric means (through the non-covalent binding of metabolites) and by covalent modification. Thus AMP allosterically activates, whereas ATP, ADP, and glucose-6-phosphate allosterically inhibit, phosphorylase B. Its function is as follows. Glycogen phosphorylase that regulates glycogen mobilization. Phosphorylase is an important allosteric enzyme in carbohydrate metabolism. Enzymes from different sources differ in their regulatory mechanisms and in their natural substrates. However, all known phosphorylases share catalytic and structural properties. In Pongo abelii (Sumatran orangutan), this protein is Glycogen phosphorylase, brain form (PYGB).